The chain runs to 217 residues: Adapter protein MecA (217 aa).

The protein belongs to the MecA family. As to quaternary structure, homodimer.

In terms of biological role, enables the recognition and targeting of unfolded and aggregated proteins to the ClpC protease or to other proteins involved in proteolysis. The protein is Adapter protein MecA of Listeria monocytogenes serovar 1/2a (strain ATCC BAA-679 / EGD-e).